The following is a 284-amino-acid chain: Protein-S-isoprenylcysteine O-methyltransferase (284 aa).

At 1–16 (MAGCAARVPPGSEARL) the chain is on the cytoplasmic side. Residues 17–33 (SLATFLLGASVLALPLL) traverse the membrane as a helical segment. Residues 34–41 (TRAGLQGR) lie on the Lumenal side of the membrane. A helical transmembrane segment spans residues 42–59 (TGLALYVAGLNALLLLLY). The Cytoplasmic portion of the chain corresponds to 60 to 69 (RPPRYQIAIR). Residues 70–87 (ACFLGFVFGCGVLLSFSQ) form a helical membrane-spanning segment. Residues 88 to 92 (SSWNH) are Lumenal-facing. Residues 93–112 (FGWYVCSLSLFHYSEYLVTA) form a helical membrane-spanning segment. Topologically, residues 113-131 (VNNPKSLSLDSFLLNHSLE) are cytoplasmic. The chain crosses the membrane as a helical span at residues 132–149 (YTVAALSSWIEFTLENIF). Over 150–154 (WPELK) the chain is Lumenal. Residues 155–174 (QITWLSAAGLLMVIFGECLR) traverse the membrane as a helical segment. The Cytoplasmic segment spans residues 175-212 (KVAMFTAGSNFNHVVQSEKSDTHTLVTSGVYAWCRHPS). Residues Gln-190, 197-200 (HTLV), Tyr-205, and 210-213 (HPSY) contribute to the S-adenosyl-L-methionine site. The helical transmembrane segment at 213-228 (YVGWFYWSIGTQVMLC) threads the bilayer. Residue Asn-229 is a topological domain, lumenal. A helical membrane pass occupies residues 230–244 (PICGVVYALTVWRFF). At 245 to 284 (RDRTEEEEISLIHFFGEEYLDYKKRVPTGLPFIKGVKVGL) the chain is on the cytoplasmic side. Residue Arg-247 participates in substrate binding. Glu-251 serves as a coordination point for S-adenosyl-L-methionine.

It belongs to the class VI-like SAM-binding methyltransferase superfamily. Isoprenylcysteine carboxyl methyltransferase family.

It localises to the endoplasmic reticulum membrane. The catalysed reaction is [protein]-C-terminal S-[(2E,6E)-farnesyl]-L-cysteine + S-adenosyl-L-methionine = [protein]-C-terminal S-[(2E,6E)-farnesyl]-L-cysteine methyl ester + S-adenosyl-L-homocysteine. In terms of biological role, catalyzes the post-translational methylation of isoprenylated C-terminal cysteine residues. The chain is Protein-S-isoprenylcysteine O-methyltransferase from Rattus norvegicus (Rat).